The primary structure comprises 99 residues: Phosphoribosyl-ATP pyrophosphatase (99 aa).

Belongs to the PRA-PH family.

It is found in the cytoplasm. The catalysed reaction is 1-(5-phospho-beta-D-ribosyl)-ATP + H2O = 1-(5-phospho-beta-D-ribosyl)-5'-AMP + diphosphate + H(+). The protein operates within amino-acid biosynthesis; L-histidine biosynthesis; L-histidine from 5-phospho-alpha-D-ribose 1-diphosphate: step 2/9. In Methanococcoides burtonii (strain DSM 6242 / NBRC 107633 / OCM 468 / ACE-M), this protein is Phosphoribosyl-ATP pyrophosphatase.